We begin with the raw amino-acid sequence, 376 residues long: Chaperone protein DnaJ (376 aa).

Residues 5-70 (DFYEVLGVGR…DKKAAYDQFG (66 aa)) enclose the J domain. Residues 132 to 210 (GLSKELRIPT…CHGEGRVEKS (79 aa)) form a CR-type zinc finger. Residues C145, C148, C162, C165, C184, C187, C198, and C201 each contribute to the Zn(2+) site. CXXCXGXG motif repeat units lie at residues 145–152 (CEPCDGSG), 162–169 (CGTCHGQG), 184–191 (CPTCHGRG), and 198–205 (CNKCHGEG).

It belongs to the DnaJ family. In terms of assembly, homodimer. It depends on Zn(2+) as a cofactor.

The protein localises to the cytoplasm. Participates actively in the response to hyperosmotic and heat shock by preventing the aggregation of stress-denatured proteins and by disaggregating proteins, also in an autonomous, DnaK-independent fashion. Unfolded proteins bind initially to DnaJ; upon interaction with the DnaJ-bound protein, DnaK hydrolyzes its bound ATP, resulting in the formation of a stable complex. GrpE releases ADP from DnaK; ATP binding to DnaK triggers the release of the substrate protein, thus completing the reaction cycle. Several rounds of ATP-dependent interactions between DnaJ, DnaK and GrpE are required for fully efficient folding. Also involved, together with DnaK and GrpE, in the DNA replication of plasmids through activation of initiation proteins. This Shewanella piezotolerans (strain WP3 / JCM 13877) protein is Chaperone protein DnaJ.